The primary structure comprises 102 residues: Small ribosomal subunit protein uS10 (102 aa).

The protein belongs to the universal ribosomal protein uS10 family. In terms of assembly, part of the 30S ribosomal subunit.

In terms of biological role, involved in the binding of tRNA to the ribosomes. The sequence is that of Small ribosomal subunit protein uS10 from Beijerinckia indica subsp. indica (strain ATCC 9039 / DSM 1715 / NCIMB 8712).